Reading from the N-terminus, the 692-residue chain is MLRLPSSMPIVSFPANPNLLINPQPSWPSRRGNSAVVVSAASRDVDSFTSKSGYLFSLSADEADSLSEYNFPRIDGMYKKKPLILLRRLAQIGTTFSYWFGLRLADEALERSDQMFKVRAAELRKLLVELGPAYVKIAQAVSSRPDLIPPIYLDELSLLQDQITPFSTEVAFNMIEDELGLPIDELFSEISPEPVAAASLGQVYQARLRRSGKVVAVKVQRPGVRAAIALDTLILRYIAGLIKKAGRFNSDLEAVVDEWATSLFKEMDYLNEAQNGIKFRKLYGGIKDVLVPKMYTEYSTSKVLVMEWVEGQKLNEVNDLYLVEVGVYCSFNQLLEYGFYHADPHPGNFLRTYDGQLAYLDFGMMGDFRPELRDGFMEACLHLVNRDFKALAKDFVTLGLLPPTAEKSAVTKALTDVFQDAISRGVRNISFGDLLGDLGKTMYRFKFRIPPYFSLVIRSLAVLEGIAIGISPNYKVLGSTYPWIARKILTDSSPQLKSSLQNLLYEEGVFRIDRLESLLSESLRTETALVQKPVVGTESNIAMKQMLAFTFTEQGSFVREILLREFAKGLDAYGLATLDSFTFSGSGPSSSLTEEDMTNLRTFYRLISLFSGMQKAKSQVKAVSKYGEALTPLDEASLVMYQLPSAQEMLPILSILPELPQESQQRLLQLPGDLVGRLVTRAFARTIRRIFL.

A chloroplast-targeting transit peptide spans 1 to 39; that stretch reads MLRLPSSMPIVSFPANPNLLINPQPSWPSRRGNSAVVVS. One can recognise a Protein kinase domain in the interval 189 to 523; sequence EISPEPVAAA…RLESLLSESL (335 aa). Residues 195–203 and Lys-218 contribute to the ATP site; that span reads VAAASLGQV. The Proton acceptor role is filled by Asp-343.

The protein belongs to the protein kinase superfamily. ADCK protein kinase family.

The protein localises to the plastid. Its subcellular location is the chloroplast. It is found in the plastoglobule. This is an uncharacterized protein from Arabidopsis thaliana (Mouse-ear cress).